The following is a 65-amino-acid chain: UPF0434 protein Mpe_A2486 (65 aa).

It belongs to the UPF0434 family.

In Methylibium petroleiphilum (strain ATCC BAA-1232 / LMG 22953 / PM1), this protein is UPF0434 protein Mpe_A2486.